An 85-amino-acid chain; its full sequence is Protein RnfH (85 aa).

It belongs to the UPF0125 (RnfH) family.

This chain is Protein RnfH, found in Cereibacter sphaeroides (strain ATCC 17029 / ATH 2.4.9) (Rhodobacter sphaeroides).